The following is a 415-amino-acid chain: Esterase FrsA (415 aa).

It belongs to the FrsA family.

The catalysed reaction is a carboxylic ester + H2O = an alcohol + a carboxylate + H(+). Functionally, catalyzes the hydrolysis of esters. The polypeptide is Esterase FrsA (Yersinia pseudotuberculosis serotype O:1b (strain IP 31758)).